The chain runs to 448 residues: tRNA modification GTPase MnmE (448 aa).

R21, E80, and K119 together coordinate (6S)-5-formyl-5,6,7,8-tetrahydrofolate. The region spanning 215 to 370 is the TrmE-type G domain; it reads GVKLAIVGRP…LSEEILKKVG (156 aa). N225 is a K(+) binding site. Residues 225 to 230, 244 to 250, and 269 to 272 contribute to the GTP site; these read NVGKSS, TDIAGTT, and DTAG. Residue S229 participates in Mg(2+) binding. K(+) contacts are provided by T244, I246, and T249. T250 is a Mg(2+) binding site. K448 is a (6S)-5-formyl-5,6,7,8-tetrahydrofolate binding site.

This sequence belongs to the TRAFAC class TrmE-Era-EngA-EngB-Septin-like GTPase superfamily. TrmE GTPase family. In terms of assembly, homodimer. Heterotetramer of two MnmE and two MnmG subunits. It depends on K(+) as a cofactor.

It is found in the cytoplasm. Its function is as follows. Exhibits a very high intrinsic GTPase hydrolysis rate. Involved in the addition of a carboxymethylaminomethyl (cmnm) group at the wobble position (U34) of certain tRNAs, forming tRNA-cmnm(5)s(2)U34. The protein is tRNA modification GTPase MnmE of Aquifex aeolicus (strain VF5).